We begin with the raw amino-acid sequence, 371 residues long: Aminomethyltransferase (371 aa).

The protein belongs to the GcvT family. As to quaternary structure, the glycine cleavage system is composed of four proteins: P, T, L and H.

It catalyses the reaction N(6)-[(R)-S(8)-aminomethyldihydrolipoyl]-L-lysyl-[protein] + (6S)-5,6,7,8-tetrahydrofolate = N(6)-[(R)-dihydrolipoyl]-L-lysyl-[protein] + (6R)-5,10-methylene-5,6,7,8-tetrahydrofolate + NH4(+). Its function is as follows. The glycine cleavage system catalyzes the degradation of glycine. This chain is Aminomethyltransferase, found in Nitrosococcus oceani (strain ATCC 19707 / BCRC 17464 / JCM 30415 / NCIMB 11848 / C-107).